Here is a 346-residue protein sequence, read N- to C-terminus: Biotin synthase (346 aa).

A Radical SAM core domain is found at 38-256 (RQVQVSTLLS…IAVARIMMPT (219 aa)). Residues cysteine 53, cysteine 57, and cysteine 60 each coordinate [4Fe-4S] cluster. [2Fe-2S] cluster contacts are provided by cysteine 97, cysteine 128, cysteine 188, and arginine 260.

This sequence belongs to the radical SAM superfamily. Biotin synthase family. As to quaternary structure, homodimer. Requires [4Fe-4S] cluster as cofactor. [2Fe-2S] cluster is required as a cofactor.

The catalysed reaction is (4R,5S)-dethiobiotin + (sulfur carrier)-SH + 2 reduced [2Fe-2S]-[ferredoxin] + 2 S-adenosyl-L-methionine = (sulfur carrier)-H + biotin + 2 5'-deoxyadenosine + 2 L-methionine + 2 oxidized [2Fe-2S]-[ferredoxin]. The protein operates within cofactor biosynthesis; biotin biosynthesis; biotin from 7,8-diaminononanoate: step 2/2. In terms of biological role, catalyzes the conversion of dethiobiotin (DTB) to biotin by the insertion of a sulfur atom into dethiobiotin via a radical-based mechanism. The polypeptide is Biotin synthase (Shigella boydii serotype 18 (strain CDC 3083-94 / BS512)).